A 111-amino-acid polypeptide reads, in one-letter code: MTLDPNVAARLKRNAEGLFTAVVQERGSGDVLMVAWMDDDALDRTLKTREATYYSRSRGEQWVKGATSGHTQHVHSVRLDCDGDTVLLTVDQVGGACHTGDHTCFDATVLL.

Residue aspartate 80 participates in Mg(2+) binding. Cysteine 81 lines the Zn(2+) pocket. 2 residues coordinate Mg(2+): aspartate 82 and aspartate 84. Residues cysteine 97 and cysteine 104 each contribute to the Zn(2+) site.

The protein belongs to the PRA-CH family. As to quaternary structure, homodimer. Mg(2+) serves as cofactor. Zn(2+) is required as a cofactor.

The protein localises to the cytoplasm. It carries out the reaction 1-(5-phospho-beta-D-ribosyl)-5'-AMP + H2O = 1-(5-phospho-beta-D-ribosyl)-5-[(5-phospho-beta-D-ribosylamino)methylideneamino]imidazole-4-carboxamide. Its pathway is amino-acid biosynthesis; L-histidine biosynthesis; L-histidine from 5-phospho-alpha-D-ribose 1-diphosphate: step 3/9. Functionally, catalyzes the hydrolysis of the adenine ring of phosphoribosyl-AMP. The sequence is that of Phosphoribosyl-AMP cyclohydrolase from Mycobacterium marinum (strain ATCC BAA-535 / M).